The chain runs to 167 residues: Protein tyrosine phosphatase type IVA 2 (167 aa).

The region spanning 5 to 158 (APVEISYENM…YRPKMRLRFR (154 aa)) is the Tyrosine-protein phosphatase domain. Cys46 and Cys101 form a disulfide bridge. Asp69 serves as the catalytic Proton donor. The active-site Phosphocysteine intermediate is Cys101. Residue 102–107 (VAGLGR) coordinates phosphate. Arg107 contributes to the substrate binding site. Cys164 is modified (cysteine methyl ester). Cys164 is lipidated: S-farnesyl cysteine. Residues 165–167 (CVQ) constitute a propeptide, removed in mature form.

The protein belongs to the protein-tyrosine phosphatase family. In terms of assembly, in contrast to PTP4A1 and PTP4A3, does not interact with tubulin. Interacts with RABGGTB. Post-translationally, farnesylated. Farnesylation is required for membrane targeting and for interaction with RABGGTB. As to expression, expressed in skeletal muscle, and at lower levels in liver, lung, heart, kidney, brain, testis and spleen.

The protein resides in the cell membrane. It is found in the early endosome. Its subcellular location is the cytoplasm. It catalyses the reaction O-phospho-L-tyrosyl-[protein] + H2O = L-tyrosyl-[protein] + phosphate. Its activity is regulated as follows. Inhibited by sodium orthovanadate and pentamidine. In terms of biological role, protein tyrosine phosphatase which stimulates progression from G1 into S phase during mitosis. Inhibits geranylgeranyl transferase type II activity by blocking the association between RABGGTA and RABGGTB. The polypeptide is Protein tyrosine phosphatase type IVA 2 (Ptp4a2) (Mus musculus (Mouse)).